The following is a 640-amino-acid chain: Telomere repeat-binding protein 4 (640 aa).

Residues 343–422 form the Ubiquitin-like domain; that stretch reads VKFSIKSLRI…LGNLGFTLEP (80 aa). Positions 442–464 are disordered; sequence TDSTKLSERSAASPALETGIPLP. One can recognise an HTH myb-type domain in the interval 530 to 589; the sequence is SQRRTRRPFSVTEVEALVSAVEEVGTGRWRDVKLRSFENASHRTYVDLKDKWKTLVHTAS. The H-T-H motif DNA-binding region spans 558 to 585; it reads WRDVKLRSFENASHRTYVDLKDKWKTLV.

Homomultimer. Interacts with SNL1 (via PAH2). Interacts with STO. Expressed ubiquitously. Highest expression in flowers and roots.

It is found in the nucleus. In terms of biological role, binds specifically to the plant telomeric double-stranded DNA sequences 5'-TTTAGGG-3'. At least 2 repeats of telomeric sequences are required for binding. Induces DNA bending. The polypeptide is Telomere repeat-binding protein 4 (TRP4) (Arabidopsis thaliana (Mouse-ear cress)).